Reading from the N-terminus, the 1603-residue chain is GATOR1 complex protein DEPDC5 (1603 aa).

Disordered stretches follow at residues 427–450, 484–527, and 696–720; these read GKKPASEKAKNGRDTSLGSPKESE, VRER…SSLG, and LSNSGAGMNPRTQNKDSLEDSVSTS. Residues 430–439 are compositionally biased toward basic and acidic residues; sequence PASEKAKNGR. Residues 494 to 508 are compositionally biased toward low complexity; sequence SASSCDVSSSPSLPS. Phosphoserine is present on serine 505. Composition is skewed to polar residues over residues 518–527 and 696–707; these read SQASDDSSLG and LSNSGAGMNPRT. Phosphoserine; by PIM1 is present on serine 1002. Over residues 1135-1153 the composition is skewed to polar residues; sequence DRGNSQTFGNSQNIGEQGY. A disordered region spans residues 1135-1165; sequence DRGNSQTFGNSQNIGEQGYSSTNSSDSSSQQ. Residues 1154–1165 are compositionally biased toward low complexity; sequence SSTNSSDSSSQQ. A DEP domain is found at 1187-1262; the sequence is PSTGVQLLSE…YGFYFYKIVT (76 aa). A Phosphoserine; by PKB/AKT1 and PIM1 modification is found at serine 1530.

This sequence belongs to the IML1 family. Within the GATOR complex, component of the GATOR1 subcomplex, made of DEPDC5, NPRL2 and NPRL3. GATOR1 mediates the strong interaction of the GATOR complex with small GTPases Rag (RagA/RRAGA, RagB/RRAGB, RagC/RRAGC and/or RagD/RRAGD) heterodimers. Interacts with SAMTOR; interaction is direct and takes place in presence of methionine, leading to inhibit the activity of the GATOR1 complex. Post-translationally, phosphorylation at Ser-1002 and Ser-1530 by AKT1 and PIM1 inhibit the activity of DEPDC5, releasing inhibition of the mTORC1 pathway. Ubiquitinated. Amino acid-induced 'Lys-48'-linked polyubiquitination of DEPDC5 by the BCR(KLHL22) ubiquitin ligase complex leads to DEPDC5 proteasomal degradation and inhibition of the GATOR1 complex. Ubiquitination may occur at multiple lysines. In terms of tissue distribution, expressed in developing and adult brain.

The protein localises to the lysosome membrane. It localises to the cytoplasm. Its subcellular location is the cytosol. It is found in the perinuclear region. In terms of biological role, as a component of the GATOR1 complex functions as an inhibitor of the amino acid-sensing branch of the mTORC1 pathway. In response to amino acid depletion, the GATOR1 complex has GTPase activating protein (GAP) activity and strongly increases GTP hydrolysis by RagA/RRAGA (or RagB/RRAGB) within heterodimeric Rag complexes, thereby turning them into their inactive GDP-bound form, releasing mTORC1 from lysosomal surface and inhibiting mTORC1 signaling. In the presence of abundant amino acids, the GATOR1 complex is negatively regulated by GATOR2, the other GATOR subcomplex, in this amino acid-sensing branch of the TORC1 pathway. Within the GATOR1 complex, DEPDC5 mediates direct interaction with the nucleotide-binding pocket of small GTPases Rag (RagA/RRAGA, RagB/RRAGB, RagC/RRAGC and/or RagD/RRAGD) and coordinates their nucleotide loading states by promoting RagA/RRAGA or RagB/RRAGB into their GDP-binding state and RagC/RRAGC or RagD/RRAGD into their GTP-binding state. However, it does not execute the GAP activity, which is mediated by NPRL2. This chain is GATOR1 complex protein DEPDC5, found in Homo sapiens (Human).